A 235-amino-acid polypeptide reads, in one-letter code: Golgi to ER traffic protein 1 (235 aa).

Met1 is a topological domain (lumenal). Residues 2–21 (HWAAAVAIFFIVVTKFLQYT) form a helical membrane-spanning segment. Topologically, residues 22-104 (NKYHEKWISK…AFQAHLHKLR (83 aa)) are cytoplasmic. The stretch at 68 to 104 (WTKNNRKLDSLDKEINNLKDEIQSENKAFQAHLHKLR) forms a coiled coil. The helical transmembrane segment at 105–125 (LLALTVPFFVFKIMYGKTPVY) threads the bilayer. The Lumenal portion of the chain corresponds to 126 to 181 (KLSSSTSTLFPTFVSGVWSQGWLYVLLHPLRTISQKWHIMEGKFGASKFDDMALQS). Residues 182-198 (VSLGIWVWALMNVINGV) traverse the membrane as a helical segment. Residues 199-235 (EFIVKQLFLTPKMEAPASVETQEEKALDAVDDAIILD) lie on the Cytoplasmic side of the membrane.

Belongs to the WRB/GET1 family. In terms of assembly, component of the Golgi to ER traffic (GET) complex, which is composed of GET1, GET2 and GET3. Within the complex, GET1 and GET2 form a heterotetramer which is stabilized by phosphatidylinositol binding and which binds to the GET3 homodimer.

The protein resides in the endoplasmic reticulum membrane. Its subcellular location is the golgi apparatus membrane. In terms of biological role, required for the post-translational delivery of tail-anchored (TA) proteins to the endoplasmic reticulum. Together with GET2, acts as a membrane receptor for soluble GET3, which recognizes and selectively binds the transmembrane domain of TA proteins in the cytosol. The GET complex cooperates with the HDEL receptor ERD2 to mediate the ATP-dependent retrieval of resident ER proteins that contain a C-terminal H-D-E-L retention signal from the Golgi to the ER. The polypeptide is Golgi to ER traffic protein 1 (Saccharomyces cerevisiae (strain RM11-1a) (Baker's yeast)).